Reading from the N-terminus, the 479-residue chain is Ribosomal RNA small subunit methyltransferase F (479 aa).

Residues 125–131 (AAAPGSK), Glu149, Asp176, and Asp194 each bind S-adenosyl-L-methionine. Cys247 functions as the Nucleophile in the catalytic mechanism.

Belongs to the class I-like SAM-binding methyltransferase superfamily. RsmB/NOP family.

It is found in the cytoplasm. The enzyme catalyses cytidine(1407) in 16S rRNA + S-adenosyl-L-methionine = 5-methylcytidine(1407) in 16S rRNA + S-adenosyl-L-homocysteine + H(+). Specifically methylates the cytosine at position 1407 (m5C1407) of 16S rRNA. The protein is Ribosomal RNA small subunit methyltransferase F of Shigella boydii serotype 4 (strain Sb227).